Here is a 470-residue protein sequence, read N- to C-terminus: Solute carrier family 7 member 13 (470 aa).

The Cytoplasmic portion of the chain corresponds to 1 to 11; the sequence is MDRGEKIQLKR. Residues 12–32 form a helical membrane-spanning segment; it reads VFGYWWGTSFLLINIIGAGIF. Residues 33-45 lie on the Extracellular side of the membrane; sequence VSPKGVLAYSCMN. Residues 46–66 traverse the membrane as a helical segment; that stretch reads VGVSLCVWAGCAILAMTSTLC. Over 67 to 87 the chain is Cytoplasmic; it reads SAEISISFPCSGAQYYFLKRY. A helical membrane pass occupies residues 88-108; the sequence is FGSTVAFLNLWTSLFLGSGVV. Topologically, residues 109–128 are extracellular; sequence AGQALLLAEYSIQPFFPSCS. The chain crosses the membrane as a helical span at residues 129-149; the sequence is VPKLPKKCLALAMLWIVGILT. At 150–162 the chain is on the cytoplasmic side; the sequence is SRGVKEVTWLQIA. The helical transmembrane segment at 163 to 183 threads the bilayer; it reads SSVLKVSILSFISLTGVVFLI. Over 184 to 206 the chain is Extracellular; that stretch reads RGKKENVERFQNAFDAELPDISH. A helical membrane pass occupies residues 207-227; it reads LIQAIFQGYFAYSGGACFTLI. The Cytoplasmic segment spans residues 228 to 240; the sequence is AGELKKPRTTIPK. Residues 241–261 form a helical membrane-spanning segment; that stretch reads CIFTALPLVTVVYLLVNISYL. Residues 262 to 287 are Extracellular-facing; that stretch reads TVLTPREILSSDAVAITWADRAFPSL. The helical transmembrane segment at 288–308 threads the bilayer; the sequence is AWIMPFAISTSLFSNLLISIF. At 309 to 336 the chain is on the cytoplasmic side; the sequence is KSSRPIYLASQEGQLPLLFNTLNSHSSP. The chain crosses the membrane as a helical span at residues 337–357; the sequence is FTAVLLLVTLGSLAIILTSLI. Position 358 (D358) is a topological domain, extracellular. Residues 359–379 form a helical membrane-spanning segment; that stretch reads LINYIFFTGSLWSILLMIGIL. Residues 380–393 lie on the Cytoplasmic side of the membrane; the sequence is RRRYQEPNLSIPYK. The chain crosses the membrane as a helical span at residues 394–414; the sequence is VFLSFPLATIVIDVGLVVIPL. Residues 415-421 are Extracellular-facing; that stretch reads VKSPNVH. The chain crosses the membrane as a helical span at residues 422–442; it reads YVYVLLLVLSGLLFYIPLIHF. The Cytoplasmic segment spans residues 443 to 470; that stretch reads KIRLAWFEKMTCYLQLLFNICLPDVSEE.

Belongs to the amino acid-polyamine-organocation (APC) superfamily. As to quaternary structure, disulfide-linked heterodimer composed of the catalytic light subunit SLC7A13 and the heavy subunit SLC3A1. Expressed in the kidney.

It is found in the apical cell membrane. It carries out the reaction L-cystine(out) + L-aspartate(in) = L-cystine(in) + L-aspartate(out). It catalyses the reaction L-cystine(out) = L-cystine(in). The enzyme catalyses L-aspartate(in) + L-glutamate(out) = L-aspartate(out) + L-glutamate(in). The catalysed reaction is L-aspartate(in) + L-glutamine(out) = L-aspartate(out) + L-glutamine(in). It carries out the reaction L-aspartate(in) + L-methionine(out) = L-aspartate(out) + L-methionine(in). It catalyses the reaction L-leucine(out) + L-aspartate(in) = L-leucine(in) + L-aspartate(out). The enzyme catalyses L-valine(out) + L-aspartate(in) = L-valine(in) + L-aspartate(out). The catalysed reaction is L-aspartate(in) + L-phenylalanine(out) = L-aspartate(out) + L-phenylalanine(in). It carries out the reaction L-tyrosine(out) + L-aspartate(in) = L-tyrosine(in) + L-aspartate(out). It catalyses the reaction L-tryptophan(out) + L-aspartate(in) = L-tryptophan(in) + L-aspartate(out). In terms of biological role, associates with SLC3A1/rBAT to form a functional heterodimeric complex that transports anionic and neutral amino acids across the apical plasma membrane of renal epithelium. Preferentially mediates exchange transport, but can also operate via facilitated diffusion. May act as a major transporter for L-cystine in late proximal tubules, ensuring its reabsorption from the luminal fluid in exchange for cytosolic L-glutamate or L-aspartate. In Homo sapiens (Human), this protein is Solute carrier family 7 member 13 (SLC7A13).